The following is a 430-amino-acid chain: Endochitinase 46 (430 aa).

The first 22 residues, M1 to A22, serve as a signal peptide directing secretion. Residues S23 to R35 constitute a propeptide that is removed on maturation. The region spanning Y39 to L408 is the GH18 domain. Chitin is bound by residues G103–T104 and G130–T133. Residue E172 is the Proton donor of the active site. Y173 is a binding site for chitin. N219 is a glycosylation site (N-linked (GlcNAc...) asparagine). Residues M238–D241 and W385 each bind chitin.

Belongs to the glycosyl hydrolase 18 family. Chitinase class V subfamily.

The protein resides in the secreted. The enzyme catalyses Random endo-hydrolysis of N-acetyl-beta-D-glucosaminide (1-&gt;4)-beta-linkages in chitin and chitodextrins.. Secreted chitinase involved in the degradation of chitin, a component of the cell walls of fungi and exoskeletal elements of some animals (including worms and arthropods). Plays a morphogenetic role during apical growth, cell division and differentiation (cell wall morphogenesis). Also acts as an antifungal agent. Involved in the degradation and further assimilation of phytopathogenic fungi, namely mycoparasitism, the major mechanism accounting for the antagonistic activity against phytopathogenic fungi displayed by Trichoderma. This Trichoderma harzianum (Hypocrea lixii) protein is Endochitinase 46 (chit46).